The sequence spans 1405 residues: DNA-directed RNA polymerase subunit beta' (1405 aa).

The Zn(2+) site is built by cysteine 70, cysteine 72, cysteine 85, and cysteine 88. Mg(2+)-binding residues include aspartate 460, aspartate 462, and aspartate 464. Cysteine 814, cysteine 888, cysteine 895, and cysteine 898 together coordinate Zn(2+).

Belongs to the RNA polymerase beta' chain family. As to quaternary structure, the RNAP catalytic core consists of 2 alpha, 1 beta, 1 beta' and 1 omega subunit. When a sigma factor is associated with the core the holoenzyme is formed, which can initiate transcription. Requires Mg(2+) as cofactor. The cofactor is Zn(2+).

The enzyme catalyses RNA(n) + a ribonucleoside 5'-triphosphate = RNA(n+1) + diphosphate. In terms of biological role, DNA-dependent RNA polymerase catalyzes the transcription of DNA into RNA using the four ribonucleoside triphosphates as substrates. This Shewanella woodyi (strain ATCC 51908 / MS32) protein is DNA-directed RNA polymerase subunit beta'.